Consider the following 460-residue polypeptide: tRNA modification GTPase MnmE (460 aa).

The (6S)-5-formyl-5,6,7,8-tetrahydrofolate site is built by arginine 22, glutamate 83, and lysine 122. In terms of domain architecture, TrmE-type G spans 219-381 (GIKTLIIGRP…LQQTILKKFQ (163 aa)). Residue asparagine 229 participates in K(+) binding. GTP is bound by residues 229–234 (NVGKSS), 248–254 (SDISGTT), and 273–276 (DTAG). Serine 233 lines the Mg(2+) pocket. Residues serine 248, isoleucine 250, and threonine 253 each coordinate K(+). Threonine 254 serves as a coordination point for Mg(2+). Lysine 460 lines the (6S)-5-formyl-5,6,7,8-tetrahydrofolate pocket.

This sequence belongs to the TRAFAC class TrmE-Era-EngA-EngB-Septin-like GTPase superfamily. TrmE GTPase family. As to quaternary structure, homodimer. Heterotetramer of two MnmE and two MnmG subunits. K(+) is required as a cofactor.

It localises to the cytoplasm. Functionally, exhibits a very high intrinsic GTPase hydrolysis rate. Involved in the addition of a carboxymethylaminomethyl (cmnm) group at the wobble position (U34) of certain tRNAs, forming tRNA-cmnm(5)s(2)U34. This chain is tRNA modification GTPase MnmE, found in Aster yellows witches'-broom phytoplasma (strain AYWB).